The chain runs to 587 residues: Barrierpepsin (587 aa).

A signal peptide spans 1 to 24 (MSAINHLCLKLILASFAIINTITA). Positions 45–393 (YATTLDIGTP…DLDNYKISLA (349 aa)) constitute a Peptidase A1 domain. Aspartate 63 is an active-site residue. Residues asparagine 84, asparagine 90, and asparagine 268 are each glycosylated (N-linked (GlcNAc...) asparagine). Aspartate 287 is an active-site residue. The N-linked (GlcNAc...) asparagine glycan is linked to asparagine 308. An intrachain disulfide couples cysteine 322 to cysteine 358. N-linked (GlcNAc...) asparagine glycosylation is found at asparagine 366, asparagine 398, asparagine 468, asparagine 503, and asparagine 551. Residues 466-505 (SRNCSTKMPGTRSTTVLSKPTQNSAMHQSTGAVTQTSNET) form a disordered region.

The protein belongs to the peptidase A1 family.

The protein resides in the secreted. It catalyses the reaction Selective cleavage of 6-Leu-|-Lys-7 bond in the pheromone alpha-mating factor.. This protein called 'barrier activity' is excreted by yeast cells mating type a. It is probably a protease that cleaves alpha-factor and thus acts as an antagonist of this mating pheromone and establishes optimal pheromone concentration for conjugation. This Saccharomyces cerevisiae (strain ATCC 204508 / S288c) (Baker's yeast) protein is Barrierpepsin (BAR1).